The sequence spans 225 residues: DNA-binding response regulator MtrA (225 aa).

Residues 4–117 (RILVVDDDAS…ELVARVRARL (114 aa)) form the Response regulatory domain. Residue D53 is modified to 4-aspartylphosphate. A DNA-binding region (ompR/PhoB-type) is located at residues 125–224 (AEMLSIADVD…VRGVGYKAGP (100 aa)).

Phosphorylated by MtrB.

Functionally, member of the two-component regulatory system MtrA/MtrB. This chain is DNA-binding response regulator MtrA (mtrA), found in Mycobacterium leprae (strain TN).